We begin with the raw amino-acid sequence, 305 residues long: tRNA pseudouridine synthase B (305 aa).

Residue aspartate 39 is the Nucleophile of the active site.

This sequence belongs to the pseudouridine synthase TruB family. Type 1 subfamily.

The enzyme catalyses uridine(55) in tRNA = pseudouridine(55) in tRNA. Responsible for synthesis of pseudouridine from uracil-55 in the psi GC loop of transfer RNAs. The chain is tRNA pseudouridine synthase B from Staphylococcus aureus (strain Mu50 / ATCC 700699).